A 324-amino-acid polypeptide reads, in one-letter code: Pepsin-2B (324 aa).

Residues 14-321 (YYGVISIGTP…DRTNNKVGFA (308 aa)) enclose the Peptidase A1 domain. Asp32 is an active-site residue. A disulfide bridge links Cys45 with Cys50. A disordered region spans residues 86-109 (QDTVSVGGGSDPNQELGESQTEPG). A compositionally biased stretch (polar residues) spans 96 to 107 (DPNQELGESQTE). Cys206 and Cys209 are joined by a disulfide. Asp214 is an active-site residue. The cysteines at positions 247 and 280 are disulfide-linked.

This sequence belongs to the peptidase A1 family.

This chain is Pepsin-2B, found in Gadus morhua (Atlantic cod).